A 246-amino-acid chain; its full sequence is Proteasome subunit alpha type-6-A (246 aa).

This sequence belongs to the peptidase T1A family. As to quaternary structure, component of the 20S core complex of the 26S proteasome. The 26S proteasome is composed of a core protease (CP), known as the 20S proteasome, capped at one or both ends by the 19S regulatory particle (RP/PA700). The 20S proteasome core is composed of 28 subunits that are arranged in four stacked rings, resulting in a barrel-shaped structure. The two end rings are each formed by seven alpha subunits, and the two central rings are each formed by seven beta subunits. The catalytic chamber with the active sites is on the inside of the barrel. Ubiquitous low levels, higher expression in siliques and flowers.

Its subcellular location is the cytoplasm. It is found in the nucleus. Its function is as follows. The proteasome is a multicatalytic proteinase complex which is characterized by its ability to cleave peptides with Arg, Phe, Tyr, Leu, and Glu adjacent to the leaving group at neutral or slightly basic pH. The proteasome has an ATP-dependent proteolytic activity. The chain is Proteasome subunit alpha type-6-A (PAA1) from Arabidopsis thaliana (Mouse-ear cress).